Consider the following 557-residue polypeptide: Urocanate hydratase (557 aa).

Residues 53–54, Gln-131, 177–179, Glu-197, Arg-202, 243–244, 264–268, 274–275, and Tyr-323 contribute to the NAD(+) site; these read GG, GMG, NA, QTSAH, and YL. Cys-411 is a catalytic residue. Gly-493 contacts NAD(+).

It belongs to the urocanase family. It depends on NAD(+) as a cofactor.

The protein localises to the cytoplasm. The enzyme catalyses 4-imidazolone-5-propanoate = trans-urocanate + H2O. It functions in the pathway amino-acid degradation; L-histidine degradation into L-glutamate; N-formimidoyl-L-glutamate from L-histidine: step 2/3. Its function is as follows. Catalyzes the conversion of urocanate to 4-imidazolone-5-propionate. In Pseudomonas putida (strain GB-1), this protein is Urocanate hydratase.